A 279-amino-acid chain; its full sequence is Shikimate dehydrogenase (NADP(+)) (279 aa).

Shikimate contacts are provided by residues 20-22 and Thr-67; that span reads SRS. Lys-71 acts as the Proton acceptor in catalysis. NADP(+) is bound at residue Asp-83. Residues Asn-92 and Asp-108 each coordinate shikimate. NADP(+) contacts are provided by residues 134–138 and Leu-223; that span reads GAGGA. Tyr-225 contributes to the shikimate binding site. Residue Gly-246 coordinates NADP(+).

Belongs to the shikimate dehydrogenase family. Homodimer.

The catalysed reaction is shikimate + NADP(+) = 3-dehydroshikimate + NADPH + H(+). It functions in the pathway metabolic intermediate biosynthesis; chorismate biosynthesis; chorismate from D-erythrose 4-phosphate and phosphoenolpyruvate: step 4/7. Involved in the biosynthesis of the chorismate, which leads to the biosynthesis of aromatic amino acids. Catalyzes the reversible NADPH linked reduction of 3-dehydroshikimate (DHSA) to yield shikimate (SA). This chain is Shikimate dehydrogenase (NADP(+)), found in Cereibacter sphaeroides (strain ATCC 17023 / DSM 158 / JCM 6121 / CCUG 31486 / LMG 2827 / NBRC 12203 / NCIMB 8253 / ATH 2.4.1.) (Rhodobacter sphaeroides).